A 313-amino-acid polypeptide reads, in one-letter code: N-acetyl-gamma-glutamyl-phosphate reductase 2 (313 aa).

Cys117 is an active-site residue.

It belongs to the NAGSA dehydrogenase family. Type 2 subfamily.

Its subcellular location is the cytoplasm. The catalysed reaction is N-acetyl-L-glutamate 5-semialdehyde + phosphate + NADP(+) = N-acetyl-L-glutamyl 5-phosphate + NADPH + H(+). It participates in amino-acid biosynthesis; L-arginine biosynthesis; N(2)-acetyl-L-ornithine from L-glutamate: step 3/4. Its function is as follows. Catalyzes the NADPH-dependent reduction of N-acetyl-5-glutamyl phosphate to yield N-acetyl-L-glutamate 5-semialdehyde. The polypeptide is N-acetyl-gamma-glutamyl-phosphate reductase 2 (Pseudomonas putida (strain ATCC 47054 / DSM 6125 / CFBP 8728 / NCIMB 11950 / KT2440)).